The primary structure comprises 390 residues: MGDTFIRHIALLGFEKRFIPSQHYVYMFLVKWQDLSEKVVYRKFTEIYEFHKMLKEMFPIEAGEIHTENRVIPHLPAPRWFDGQRAAESRQGTLTEYFNGLMGLPVKISRCPHLLDFFKVRPDDLKLPTDSQAKKPETYLVPKDGKNNVADITGPIILQTYRAIADYEKSSGTEMTVATGDVVDVVEKSESGWWFCQMKTKRGWVPASYLEPLDSPDEAEDPDPNYAGEPYVTIKAYAAVEEDEMSLSEGEAIEVIHKLLDGWWVVRKGDITGYFPSMYLQKAGEEITQAQRQIRGRGAPPRRSTIRNAQSIHQRSRKRLSQDTYRRNSVRFLQQRRRPGRPGPLSTDGTKDNPSTPRVKPQPAVPPRPSSDLILHRCTESTKRKLTSAV.

The PX domain occupies 4–125; it reads TFIRHIALLG…DFFKVRPDDL (122 aa). 2 consecutive SH3 domains span residues 156 to 215 and 226 to 285; these read IILQ…PLDS and YAGE…KAGE. A disordered region spans residues 291 to 390; the sequence is QRQIRGRGAP…STKRKLTSAV (100 aa). A phosphoserine mark is found at Ser-304, Ser-321, Ser-329, and Ser-346. Residues 374–383 show a composition bias toward basic and acidic residues; sequence ILHRCTESTK.

As to quaternary structure, component of the phagocyte NADPH oxidase complex composed of an obligatory core heterodimer formed by the membrane proteins CYBA and CYBB and the cytosolic regulatory subunits NCF1/p47-phox, NCF2/p67-phox, NCF4/p40-phox and the small GTPase RAC1 or RAC2. Part of a cytosolic complex composed at least by NCF1, NCF2 and NCF4. Interacts (via C-terminus) with NCF2 (via the C-terminal SH3 domain). Interacts with NCF4. Interacts with CYBB. Interacts (via the second SH3 domain) with CYBA; interaction is phosphorylation-dependent. Interacts with NOXA1. Interacts with ADAM15. Interacts with TRAF4. Interacts with FASLG. Interacts with PARK7 (via C-terminus); the interaction is enhanced by LPS and modulates NCF1 phosphorylation and membrane translocation. In terms of processing, phosphorylated by PRKCD; phosphorylation induces activation of NCF1, leading to assembly and activation of the NADPH oxidase complex.

It localises to the cytoplasm. It is found in the cytosol. The protein resides in the membrane. Subunit of the phagocyte NADPH oxidase complex that mediates the transfer of electrons from cytosolic NADPH to O2 to produce the superoxide anion (O2(-)). In the activated complex, electrons are first transferred from NADPH to flavin adenine dinucleotide (FAD) and subsequently transferred via two heme molecules to molecular oxygen, producing superoxide through an outer-sphere reaction. Activation of the NADPH oxidase complex is initiated by the assembly of cytosolic subunits of the NADPH oxidase complex with the core NADPH oxidase complex to form a complex at the plasma membrane or phagosomal membrane. This activation process is initiated by phosphorylation dependent binding of the cytosolic NCF1/p47-phox subunit to the C-terminus of CYBA/p22-phox. The sequence is that of Neutrophil cytosol factor 1 from Mus musculus (Mouse).